Here is a 236-residue protein sequence, read N- to C-terminus: Carbonyl reductase family member 4 (236 aa).

Residues 11 to 14 (SRGI), 34 to 35 (RD), D55, and 82 to 84 (SAG) contribute to the NADP(+) site. S134 serves as a coordination point for substrate. NADP(+)-binding positions include Y147, K151, and 180-182 (IHT). Catalysis depends on Y147, which acts as the Proton acceptor.

Belongs to the short-chain dehydrogenases/reductases (SDR) family. As to quaternary structure, homotetramer (in vitro). Heterotetramer with HSD17B8; contains two molecules each of HSD17B8 and CBR4.

The protein localises to the mitochondrion matrix. The protein operates within lipid metabolism; fatty acid biosynthesis. The heterotetramer with HSD17B8 has NADH-dependent 3-ketoacyl-acyl carrier protein reductase activity, and thereby plays a role in mitochondrial fatty acid biosynthesis. Within the heterotetramer, HSD17B8 binds NADH; CBR4 binds NADPD. The homotetramer has NADPH-dependent quinone reductase activity. Both homotetramer and the heterotetramer have broad in vitro substrate specificity and can reduce 9,10-phenanthrenequinone, 1,4-benzoquinone and various other o-quinones and p-quinones. This chain is Carbonyl reductase family member 4 (cbr4), found in Xenopus tropicalis (Western clawed frog).